We begin with the raw amino-acid sequence, 331 residues long: Probable mannose-1-phosphate guanylyltransferase 3 (331 aa).

Lys3 lines the diphosphate pocket. Positions 66, 90, 92, 127, and 154 each coordinate GDP-alpha-D-mannose.

It belongs to the transferase hexapeptide repeat family.

It catalyses the reaction alpha-D-mannose 1-phosphate + GTP + H(+) = GDP-alpha-D-mannose + diphosphate. The protein operates within nucleotide-sugar biosynthesis; GDP-alpha-D-mannose biosynthesis; GDP-alpha-D-mannose from alpha-D-mannose 1-phosphate (GTP route): step 1/1. Functionally, catalyzes a reaction of the Smirnoff-Wheeler pathway, the major route to ascorbate biosynthesis in plants. This is Probable mannose-1-phosphate guanylyltransferase 3 from Arabidopsis thaliana (Mouse-ear cress).